Here is a 181-residue protein sequence, read N- to C-terminus: MSTETLELIKNSIKSVPDYPKAGIMFRDVTSLMEDPKAYQATIQLLVEKYKQGGFTKIVGTEARGFLFGAPLALELGVGFVPVRKPGKLPRPTIAQTYDLEYGTDTLEIHTDAIVEGDKVLVVDDLLATGGTIEATVKLIRQLGGDVQHAAFVINLPEIGGETRLEGLGLNVYSICEFPGH.

Belongs to the purine/pyrimidine phosphoribosyltransferase family. As to quaternary structure, homodimer.

It is found in the cytoplasm. The enzyme catalyses AMP + diphosphate = 5-phospho-alpha-D-ribose 1-diphosphate + adenine. It functions in the pathway purine metabolism; AMP biosynthesis via salvage pathway; AMP from adenine: step 1/1. Its function is as follows. Catalyzes a salvage reaction resulting in the formation of AMP, that is energically less costly than de novo synthesis. The polypeptide is Adenine phosphoribosyltransferase (Aliivibrio salmonicida (strain LFI1238) (Vibrio salmonicida (strain LFI1238))).